The chain runs to 392 residues: MLRIVLARSSRAMSSASPASASDSDTSVRKIGKALETYLKHSQQHVAMMEKHRAEFETGRRHLAKMMSLDIHELDQEAIDRAILYLFPSGLTDPNARPVMRPPDEILPKFQRFTFDEEGKPEGSRFFTLSPKIYGLLSDIGVKTHSVMKFYDEHVGSRSVNRSDLEPANLSGSQWVTADKLKKKLSEKFSKELYGQVIIAFEHLASLPGSAIEQKFLMEFREPMTASTGSKLFGPAIPEVHVCAVTNRRYAEVTTRCKDTRATVKVTDAGKGKFDIDGLQLHDFRHLQAREILLAPMIVSQSLGRFDVTATTSCISNTLPEAPNKAPLMRSGGMSALPRAVRHGTALCVAALQPEAIEPLRLSGLLTLDPRKNERSKVNQPGARAKWIWKRR.

A compositionally biased stretch (low complexity) spans Arg-8–Asp-25. Residues Arg-8–Ser-27 are disordered.

This sequence belongs to the universal ribosomal protein uS9 family. In terms of assembly, component of the mitochondrial ribosome small subunit (28S) which comprises a 12S rRNA and about 30 distinct proteins.

It localises to the mitochondrion. The chain is Small ribosomal subunit protein uS9m (mrps-9) from Caenorhabditis elegans.